The sequence spans 362 residues: Ferrochelatase (362 aa).

Histidine 228 and glutamate 309 together coordinate Fe cation.

Belongs to the ferrochelatase family.

The protein resides in the cytoplasm. It catalyses the reaction heme b + 2 H(+) = protoporphyrin IX + Fe(2+). It participates in porphyrin-containing compound metabolism; protoheme biosynthesis; protoheme from protoporphyrin-IX: step 1/1. Its function is as follows. Catalyzes the ferrous insertion into protoporphyrin IX. In Bordetella bronchiseptica (strain ATCC BAA-588 / NCTC 13252 / RB50) (Alcaligenes bronchisepticus), this protein is Ferrochelatase.